The sequence spans 175 residues: Protein FanH (175 aa).

The first 20 residues, methionine 1–alanine 20, serve as a signal peptide directing secretion. Cysteine 39 and cysteine 77 are joined by a disulfide.

It is found in the fimbrium. In terms of biological role, involved in the biosynthesis of K99 fimbriae. In Escherichia coli, this protein is Protein FanH (fanH).